The following is a 142-amino-acid chain: Large-conductance mechanosensitive channel (142 aa).

A run of 3 helical transmembrane segments spans residues 10–30 (FAVK…GAFG), 40–60 (LIMP…LFIV), and 86–106 (GNFI…FVMV).

Belongs to the MscL family. In terms of assembly, homopentamer.

The protein resides in the cell inner membrane. In terms of biological role, channel that opens in response to stretch forces in the membrane lipid bilayer. May participate in the regulation of osmotic pressure changes within the cell. In Acidovorax ebreus (strain TPSY) (Diaphorobacter sp. (strain TPSY)), this protein is Large-conductance mechanosensitive channel.